The primary structure comprises 677 residues: WD repeat-containing protein 43 (677 aa).

6 WD repeats span residues 11–51 (PLAP…LHQE), 57–119 (HLSG…LHSK), 124–163 (GHDNRVNCIQWHQDSGCLYSCSDDKHIVEWNVQTCKVKCK), 166–205 (GDNSSVSSLCISPDGKMLLSAGRTIKLWVLETKEVYRHFT), 207–259 (HATP…KEKS), and 267–309 (TDEP…YCKK). Serine 77 is subject to Phosphoserine. A Glycyl lysine isopeptide (Lys-Gly) (interchain with G-Cter in SUMO1); alternate cross-link involves residue lysine 309. A Glycyl lysine isopeptide (Lys-Gly) (interchain with G-Cter in SUMO2); alternate cross-link involves residue lysine 309. Threonine 321 carries the post-translational modification Phosphothreonine. Lysine 384 is covalently cross-linked (Glycyl lysine isopeptide (Lys-Gly) (interchain with G-Cter in SUMO1); alternate). A Glycyl lysine isopeptide (Lys-Gly) (interchain with G-Cter in SUMO2); alternate cross-link involves residue lysine 384. Threonine 394 carries the post-translational modification Phosphothreonine. Serine 399, serine 431, serine 437, and serine 590 each carry phosphoserine. Disordered regions lie at residues 414–445 (AIKPAPPQTEQVESKRKSGGNEVSIEERLGAM) and 582–677 (SEKT…SEEE). Positions 582 to 592 (SEKTKGATSPG) are enriched in polar residues. A compositionally biased stretch (acidic residues) spans 600–652 (EEESSEEESDDEIADKDSEDNWDEDEEESESEKDEDVEEEDEDAEGKDEENGE). Basic and acidic residues predominate over residues 653-663 (DRDTASEKELN). A Phosphothreonine modification is found at threonine 656. Serine 658 is subject to Phosphoserine. A compositionally biased stretch (acidic residues) spans 664–677 (GDSDLDPENESEEE).

Belongs to the UTP5 family. As to quaternary structure, part of the small subunit (SSU) processome, composed of more than 70 proteins and the RNA chaperone small nucleolar RNA (snoRNA) U3. May be a component of the proposed t-UTP subcomplex of the ribosomal small subunit (SSU) processome containing at least UTP4, WDR43, HEATR1, UTP15, WDR75. Binds to RNA; binding is required for its chromatin association. Interacts with CDK9, DDX21 and SUPT6H. Interacts with RNA polymerase II. Interacts directly with UTP4 and UTP15.

The protein localises to the nucleus. Its subcellular location is the nucleolus. The protein resides in the nucleolus fibrillar center. It localises to the nucleoplasm. In terms of biological role, ribosome biogenesis factor that coordinates hyperactive transcription and ribogenesis. Part of the small subunit (SSU) processome, first precursor of the small eukaryotic ribosomal subunit. During the assembly of the SSU processome in the nucleolus, many ribosome biogenesis factors, an RNA chaperone and ribosomal proteins associate with the nascent pre-rRNA and work in concert to generate RNA folding, modifications, rearrangements and cleavage as well as targeted degradation of pre-ribosomal RNA by the RNA exosome. Involved in nucleolar processing of pre-18S ribosomal RNA. Required for optimal pre-ribosomal RNA transcription by RNA polymerase I. Essential for stem cell pluripotency and embryonic development. In the nucleoplasm, recruited by promoter-associated/nascent transcripts and transcription to active promoters where it facilitates releases of elongation factor P-TEFb and paused RNA polymerase II to allow transcription elongation and maintain high-level expression of its targets genes. This is WD repeat-containing protein 43 from Homo sapiens (Human).